Here is an 875-residue protein sequence, read N- to C-terminus: Neurotrypsin (875 aa).

A signal peptide spans methionine 1–glycine 20. An N-linked (GlcNAc...) asparagine glycan is attached at asparagine 26. Positions leucine 29–proline 88 are disordered. Pro residues predominate over residues threonine 56–alanine 71. A Kringle domain is found at cysteine 93–cysteine 165. 20 disulfide bridges follow: cysteine 93–cysteine 165, cysteine 109–cysteine 149, cysteine 138–cysteine 163, cysteine 195–cysteine 259, cysteine 208–cysteine 269, cysteine 239–cysteine 249, cysteine 305–cysteine 369, cysteine 318–cysteine 379, cysteine 349–cysteine 359, cysteine 412–cysteine 475, cysteine 425–cysteine 485, cysteine 455–cysteine 465, cysteine 525–cysteine 589, cysteine 538–cysteine 599, cysteine 569–cysteine 579, cysteine 619–cysteine 750, cysteine 661–cysteine 677, cysteine 765–cysteine 831, cysteine 794–cysteine 808, and cysteine 821–cysteine 850. 4 consecutive SRCR domains span residues valine 170–phenylalanine 271, isoleucine 280–proline 381, isoleucine 387–proline 487, and valine 500–tyrosine 601. The tract at residues cysteine 619–arginine 630 is zymogen activation region. Positions isoleucine 631–lysine 874 constitute a Peptidase S1 domain. Histidine 676 (charge relay system) is an active-site residue. N-linked (GlcNAc...) asparagine glycosylation is present at asparagine 683. The active-site Charge relay system is the aspartate 726. Catalysis depends on serine 825, which acts as the Charge relay system.

This sequence belongs to the peptidase S1 family. As to expression, brain and Leydig cells of the testis.

The protein resides in the secreted. Its function is as follows. Plays a role in neuronal plasticity and the proteolytic action may subserve structural reorganizations associated with learning and memory operations. The polypeptide is Neurotrypsin (PRSS12) (Homo sapiens (Human)).